We begin with the raw amino-acid sequence, 304 residues long: Large ribosomal subunit protein uL18z (304 aa).

Residues 285–304 (LNALNSSAGADDDDEEEDDE) are disordered. The segment covering 294–304 (ADDDDEEEDDE) has biased composition (acidic residues).

Belongs to the universal ribosomal protein uL18 family. In terms of assembly, component of the large ribosomal subunit (LSU).

The protein resides in the cytoplasm. It is found in the nucleus. Functionally, component of the ribosome, a large ribonucleoprotein complex responsible for the synthesis of proteins in the cell. The small ribosomal subunit (SSU) binds messenger RNAs (mRNAs) and translates the encoded message by selecting cognate aminoacyl-transfer RNA (tRNA) molecules. The large subunit (LSU) contains the ribosomal catalytic site termed the peptidyl transferase center (PTC), which catalyzes the formation of peptide bonds, thereby polymerizing the amino acids delivered by tRNAs into a polypeptide chain. The nascent polypeptides leave the ribosome through a tunnel in the LSU and interact with protein factors that function in enzymatic processing, targeting, and the membrane insertion of nascent chains at the exit of the ribosomal tunnel. In Oryza sativa subsp. japonica (Rice), this protein is Large ribosomal subunit protein uL18z (RPL5A).